Here is a 314-residue protein sequence, read N- to C-terminus: E3 ubiquitin-protein ligase CHIP (314 aa).

Over residues 1 to 11 (MKGKEEREREG) the composition is skewed to basic and acidic residues. Residues 1–47 (MKGKEEREREGGGGAVGPGAAGPGAGGGSPEKSHSAQEHKEQGNRLF) are disordered. Residues 12–29 (GGGAVGPGAAGPGAGGGS) show a composition bias toward gly residues. The segment covering 31-43 (EKSHSAQEHKEQG) has biased composition (basic and acidic residues). TPR repeat units lie at residues 36-69 (AQEHKEQGNRLFGGRKYPEAAAAYGRAINRNPLV), 70-103 (AVYYTNRALCYLKMQQHDKALADCKRALELDGQS), and 105-137 (KAHFFLGQCQMEMENYDEAIANLQRAYNLAKEQ). The U-box domain occupies 237–311 (DIPDYLCGKI…DAFISENGWV (75 aa)).

Homodimer.

The protein localises to the cytoplasm. The protein resides in the nucleus. Its subcellular location is the mitochondrion. It catalyses the reaction S-ubiquitinyl-[E2 ubiquitin-conjugating enzyme]-L-cysteine + [acceptor protein]-L-lysine = [E2 ubiquitin-conjugating enzyme]-L-cysteine + N(6)-ubiquitinyl-[acceptor protein]-L-lysine.. Functionally, E3 ubiquitin-protein ligase which targets misfolded chaperone substrates towards proteasomal degradation. Collaborates with ATXN3 in the degradation of misfolded chaperone substrates: ATXN3 restricting the length of ubiquitin chain attached to STUB1/CHIP substrates and preventing further chain extension. This Gallus gallus (Chicken) protein is E3 ubiquitin-protein ligase CHIP.